The sequence spans 106 residues: uncharacterized protein (106 aa).

A disordered region spans residues 28–68; it reads SSANEPKKLPNKKLVSTKSHTQVNREKSKNKDTYEDYSDSN. Residues 50-61 show a composition bias toward basic and acidic residues; it reads VNREKSKNKDTY.

This is an uncharacterized protein from Acanthamoeba polyphaga (Amoeba).